A 524-amino-acid polypeptide reads, in one-letter code: Ribose import ATP-binding protein RbsA (524 aa).

ABC transporter domains follow at residues 17-252 (LQLD…GRSI) and 263-505 (IGQP…VSQV). 49–56 (GENGAGKS) is an ATP binding site.

Belongs to the ABC transporter superfamily. Ribose importer (TC 3.A.1.2.1) family. As to quaternary structure, the complex is composed of an ATP-binding protein (RbsA), two transmembrane proteins (RbsC) and a solute-binding protein (RbsB).

The protein localises to the cell membrane. The enzyme catalyses D-ribose(out) + ATP + H2O = D-ribose(in) + ADP + phosphate + H(+). Functionally, part of the ABC transporter complex RbsABC involved in ribose import. Responsible for energy coupling to the transport system. This Corynebacterium glutamicum (strain ATCC 13032 / DSM 20300 / JCM 1318 / BCRC 11384 / CCUG 27702 / LMG 3730 / NBRC 12168 / NCIMB 10025 / NRRL B-2784 / 534) protein is Ribose import ATP-binding protein RbsA.